The sequence spans 165 residues: Large ribosomal subunit protein uL10 (165 aa).

Belongs to the universal ribosomal protein uL10 family. As to quaternary structure, part of the ribosomal stalk of the 50S ribosomal subunit. The N-terminus interacts with L11 and the large rRNA to form the base of the stalk. The C-terminus forms an elongated spine to which L12 dimers bind in a sequential fashion forming a multimeric L10(L12)X complex.

Functionally, forms part of the ribosomal stalk, playing a central role in the interaction of the ribosome with GTP-bound translation factors. The chain is Large ribosomal subunit protein uL10 from Burkholderia cenocepacia (strain HI2424).